The sequence spans 147 residues: NAD(P)H-quinone oxidoreductase subunit N (147 aa).

This sequence belongs to the complex I NdhN subunit family. As to quaternary structure, NDH-1 can be composed of about 15 different subunits; different subcomplexes with different compositions have been identified which probably have different functions.

The protein resides in the cellular thylakoid membrane. The catalysed reaction is a plastoquinone + NADH + (n+1) H(+)(in) = a plastoquinol + NAD(+) + n H(+)(out). It catalyses the reaction a plastoquinone + NADPH + (n+1) H(+)(in) = a plastoquinol + NADP(+) + n H(+)(out). Functionally, NDH-1 shuttles electrons from an unknown electron donor, via FMN and iron-sulfur (Fe-S) centers, to quinones in the respiratory and/or the photosynthetic chain. The immediate electron acceptor for the enzyme in this species is believed to be plastoquinone. Couples the redox reaction to proton translocation, and thus conserves the redox energy in a proton gradient. Cyanobacterial NDH-1 also plays a role in inorganic carbon-concentration. The chain is NAD(P)H-quinone oxidoreductase subunit N from Synechococcus sp. (strain JA-3-3Ab) (Cyanobacteria bacterium Yellowstone A-Prime).